The sequence spans 260 residues: Small ribosomal subunit protein eS1 (260 aa).

A compositionally biased stretch (basic residues) spans 1 to 18 (MAVGKNKRISKGKKGGKK). The tract at residues 1–22 (MAVGKNKRISKGKKGGKKKAAD) is disordered.

It belongs to the eukaryotic ribosomal protein eS1 family. In terms of assembly, component of the small ribosomal subunit. Mature ribosomes consist of a small (40S) and a large (60S) subunit. The 40S subunit contains about 33 different proteins and 1 molecule of RNA (18S). The 60S subunit contains about 49 different proteins and 3 molecules of RNA (25S, 5.8S and 5S).

The protein localises to the cytoplasm. This is Small ribosomal subunit protein eS1 from Helianthus annuus (Common sunflower).